The sequence spans 627 residues: Sphingomyelin phosphodiesterase (627 aa).

The signal sequence occupies residues 1 to 44 (MPHHRASSGQDHLRAGWEQRLERSLPAPRVGLLWMGLGLALVLA). The region spanning 83–167 (QNLTCPACKV…LLGSSCGHWD (85 aa)) is the Saposin B-type domain. Asparagine 84 carries N-linked (GlcNAc...) asparagine glycosylation. Cystine bridges form between cysteine 87/cysteine 163, cysteine 90/cysteine 155, and cysteine 118/cysteine 129. Asparagine 173 carries an N-linked (GlcNAc...) asparagine glycan. Positions 204 and 206 each coordinate Zn(2+). 2 disulfides stabilise this stretch: cysteine 219–cysteine 224 and cysteine 225–cysteine 248. Aspartate 276 and asparagine 316 together coordinate Zn(2+). Residues asparagine 333 and asparagine 393 are each glycosylated (N-linked (GlcNAc...) asparagine). Cysteine 383 and cysteine 429 form a disulfide bridge. Positions 423, 455, and 457 each coordinate Zn(2+). The residue at position 506 (serine 506) is a Phosphoserine. N-linked (GlcNAc...) asparagine glycosylation occurs at asparagine 518. 2 disulfides stabilise this stretch: cysteine 582–cysteine 586 and cysteine 592–cysteine 605. The N-linked (GlcNAc...) asparagine glycan is linked to asparagine 611.

Belongs to the acid sphingomyelinase family. Monomer. Interacts with SORT1; the interaction is required for SMPD1 targeting to lysosomes. It depends on Zn(2+) as a cofactor. In terms of processing, proteolytically processed. Mature lysosomal form arises from C-terminal proteolytic processing of pro-sphingomyelin phosphodiesterase. Post-translationally, both lysosomal and secreted forms are glycosylated but they show a differential pattern of glycosylation. Phosphorylated at Ser-506 by PRKCD upon stress stimuli. Phosphorylation is required for secretion. In terms of processing, this form is generated following cleavage by CASP7 in the extracellular milieu. It shows increased activity.

It is found in the lysosome. The protein resides in the lipid droplet. Its subcellular location is the secreted. It localises to the extracellular space. The catalysed reaction is a sphingomyelin + H2O = phosphocholine + an N-acylsphing-4-enine + H(+). The enzyme catalyses N-(octadecanoyl)-sphing-4-enine-1-phosphocholine + H2O = N-octadecanoylsphing-4-enine + phosphocholine + H(+). It carries out the reaction a 1,2-diacyl-sn-glycero-3-phosphocholine + H2O = phosphocholine + a 1,2-diacyl-sn-glycerol + H(+). It catalyses the reaction 1,2-dihexadecanoyl-sn-glycero-3-phosphocholine + H2O = 1,2-dihexadecanoyl-sn-glycerol + phosphocholine + H(+). Hydrolysis of liposomal sphingomyelin is stimulated by incorporation of diacylglycerol (DAG), ceramide and free fatty acids into the liposomal membranes. Phosphatidylcholine hydrolysis is inhibited by incorporation of cholesterol, ceramide, DAG, monoacylglycerol and fatty acids. Converts sphingomyelin to ceramide. Exists as two enzymatic forms that arise from alternative trafficking of a single protein precursor, one that is targeted to the endolysosomal compartment, whereas the other is released extracellularly. However, in response to various forms of stress, lysosomal exocytosis may represent a major source of the secretory form. Its function is as follows. In the lysosomes, converts sphingomyelin to ceramide. Plays an important role in the export of cholesterol from the intraendolysosomal membranes. Also has phospholipase C activities toward 1,2-diacylglycerolphosphocholine and 1,2-diacylglycerolphosphoglycerol. Modulates stress-induced apoptosis through the production of ceramide. In terms of biological role, when secreted, modulates cell signaling with its ability to reorganize the plasma membrane by converting sphingomyelin to ceramide. Secreted form is increased in response to stress and inflammatory mediators such as IL1B, IFNG or TNF as well as upon infection with bacteria and viruses. Produces the release of ceramide in the outer leaflet of the plasma membrane playing a central role in host defense. Ceramide reorganizes these rafts into larger signaling platforms that are required to internalize P.aeruginosa, induce apoptosis and regulate the cytokine response in infected cells. In wounded cells, the lysosomal form is released extracellularly in the presence of Ca(2+) and promotes endocytosis and plasma membrane repair. Functionally, this form is generated following cleavage by CASP7 in the extracellular milieu in response to bacterial infection. It shows increased ability to convert sphingomyelin to ceramide and promotes plasma membrane repair. Plasma membrane repair by ceramide counteracts the action of gasdermin-D (GSDMD) perforin (PRF1) pores that are formed in response to bacterial infection. (Microbial infection) Secretion is activated by bacteria such as P.aeruginosa, this activation results in the release of ceramide in the outer leaflet of the plasma membrane which facilitates the infection. This Mus musculus (Mouse) protein is Sphingomyelin phosphodiesterase.